Here is a 334-residue protein sequence, read N- to C-terminus: Ficolin-1 (334 aa).

The N-terminal stretch at 1–17 is a signal peptide; that stretch reads MQWPTLWAFSGLLCLCP. The disordered stretch occupies residues 47 to 117; the sequence is SCPGFPGPPG…SLGEKELGDT (71 aa). Positions 50–88 constitute a Collagen-like domain; it reads GFPGPPGPKGEPGSPAGRGERGFQGSPGKMGPAGSKGEP. The Fibrinogen C-terminal domain occupies 117-334; the sequence is TLCQRGPRSC…KVAEMKIRAS (218 aa). 2 disulfide bridges follow: cysteine 119–cysteine 147 and cysteine 126–cysteine 154. The a domain; contributes to trimerization stretch occupies residues 123 to 162; the sequence is PRSCKDLLTRGIFLTGWYTIHLPDCRPLTVLCDMDVDGGG. Residues 163-251 form a b domain; contributes to trimerization region; that stretch reads WTVFQRRVDG…LTLGQFLEGT (89 aa). Residue asparagine 261 is glycosylated (N-linked (GlcNAc...) asparagine). Ca(2+) is bound by residues aspartate 270 and aspartate 272. The cysteines at positions 278 and 291 are disulfide-linked. Residue 290 to 292 coordinates a carbohydrate; it reads NCH. The tract at residues 325–334 is p domain; that stretch reads KVAEMKIRAS.

The protein belongs to the ficolin lectin family. As to quaternary structure, homotrimer. Interacts with elastin/ELN. Interacts (via Fibrinogen C-terminal domain) with FFAR2. Interacts with CRP; may regulate monocyte activation by FCN1. Highly expressed in liver and spleen.

It localises to the secreted. The protein localises to the cell membrane. In terms of biological role, extracellular lectin functioning as a pattern-recognition receptor in innate immunity. Binds the sugar moieties of pathogen-associated molecular patterns (PAMPs) displayed on microbes and activates the lectin pathway of the complement system. May also activate monocytes through a G protein-coupled receptor, FFAR2, inducing the secretion of interleukin-8/IL-8. Binds preferentially to 9-O-acetylated 2-6-linked sialic acid derivatives and to various glycans containing sialic acid engaged in a 2-3 linkage. The protein is Ficolin-1 (Fcn1) of Mus musculus (Mouse).